A 351-amino-acid chain; its full sequence is Thiamine-phosphate synthase (351 aa).

Positions 1 to 129 (MVEPYSQKEQ…AKACKQMRYQ (129 aa)) are unknown. The interval 65 to 85 (LRAARDTPGDPGTELTHPQEE) is disordered. The segment at 130–351 (VYTLESNLMG…SQLNRIKPEL (222 aa)) is thiamine-phosphate synthase. 4-amino-2-methyl-5-(diphosphooxymethyl)pyrimidine contacts are provided by residues 177–181 (QYRDK) and N209. D210 and D229 together coordinate Mg(2+). S248 is a 4-amino-2-methyl-5-(diphosphooxymethyl)pyrimidine binding site. 274–276 (TPT) is a binding site for 2-[(2R,5Z)-2-carboxy-4-methylthiazol-5(2H)-ylidene]ethyl phosphate. Residue K277 coordinates 4-amino-2-methyl-5-(diphosphooxymethyl)pyrimidine. G304 is a 2-[(2R,5Z)-2-carboxy-4-methylthiazol-5(2H)-ylidene]ethyl phosphate binding site.

This sequence belongs to the thiamine-phosphate synthase family. Mg(2+) is required as a cofactor.

The enzyme catalyses 2-[(2R,5Z)-2-carboxy-4-methylthiazol-5(2H)-ylidene]ethyl phosphate + 4-amino-2-methyl-5-(diphosphooxymethyl)pyrimidine + 2 H(+) = thiamine phosphate + CO2 + diphosphate. It carries out the reaction 2-(2-carboxy-4-methylthiazol-5-yl)ethyl phosphate + 4-amino-2-methyl-5-(diphosphooxymethyl)pyrimidine + 2 H(+) = thiamine phosphate + CO2 + diphosphate. It catalyses the reaction 4-methyl-5-(2-phosphooxyethyl)-thiazole + 4-amino-2-methyl-5-(diphosphooxymethyl)pyrimidine + H(+) = thiamine phosphate + diphosphate. It participates in cofactor biosynthesis; thiamine diphosphate biosynthesis; thiamine phosphate from 4-amino-2-methyl-5-diphosphomethylpyrimidine and 4-methyl-5-(2-phosphoethyl)-thiazole: step 1/1. Its function is as follows. Condenses 4-methyl-5-(beta-hydroxyethyl)thiazole monophosphate (THZ-P) and 2-methyl-4-amino-5-hydroxymethyl pyrimidine pyrophosphate (HMP-PP) to form thiamine monophosphate (TMP). This chain is Thiamine-phosphate synthase, found in Nostoc punctiforme (strain ATCC 29133 / PCC 73102).